A 467-amino-acid polypeptide reads, in one-letter code: 3-isopropylmalate dehydratase large subunit (467 aa).

[4Fe-4S] cluster is bound by residues C347, C407, and C410.

Belongs to the aconitase/IPM isomerase family. LeuC type 1 subfamily. In terms of assembly, heterodimer of LeuC and LeuD. The cofactor is [4Fe-4S] cluster.

The catalysed reaction is (2R,3S)-3-isopropylmalate = (2S)-2-isopropylmalate. It participates in amino-acid biosynthesis; L-leucine biosynthesis; L-leucine from 3-methyl-2-oxobutanoate: step 2/4. In terms of biological role, catalyzes the isomerization between 2-isopropylmalate and 3-isopropylmalate, via the formation of 2-isopropylmaleate. The sequence is that of 3-isopropylmalate dehydratase large subunit from Trichormus variabilis (strain ATCC 29413 / PCC 7937) (Anabaena variabilis).